The primary structure comprises 170 residues: MSKAAKKKSSKKRSGSEAAQFDQKTIQEFKEAFGIMDQNKDGIIDKSDLKDLYASMGQIAPDSQIDAMIKEASGPINFTVFLTLFGERLTGTDPEATIIGAFAMFDKKDCGKIKEDDLIKILQNKRGEPLDEDEVKAMYKGKPPIEGGEVDYKAFAHLITTGAQDELASA.

A compositionally biased stretch (basic residues) spans Met1–Arg13. Residues Met1–Asp22 form a disordered region. EF-hand domains follow at residues Lys24–Ile59 and Asp93–Glu128. The Ca(2+) site is built by Asp37, Asn39, Asp41, and Asp48.

In terms of assembly, myosin is a hexamer of 2 heavy chains and 4 light chains (two regulatory light chains and two essential light chains).

This is Myosin regulatory light chain 1 (mlc-1) from Caenorhabditis elegans.